The chain runs to 133 residues: Large ribosomal subunit protein uL22 (133 aa).

The protein belongs to the universal ribosomal protein uL22 family. In terms of assembly, part of the 50S ribosomal subunit.

Functionally, this protein binds specifically to 23S rRNA; its binding is stimulated by other ribosomal proteins, e.g. L4, L17, and L20. It is important during the early stages of 50S assembly. It makes multiple contacts with different domains of the 23S rRNA in the assembled 50S subunit and ribosome. In terms of biological role, the globular domain of the protein is located near the polypeptide exit tunnel on the outside of the subunit, while an extended beta-hairpin is found that lines the wall of the exit tunnel in the center of the 70S ribosome. In Aquifex aeolicus (strain VF5), this protein is Large ribosomal subunit protein uL22.